Consider the following 319-residue polypeptide: Lipoyl synthase (319 aa).

Cysteine 66, cysteine 71, cysteine 77, cysteine 92, cysteine 96, cysteine 99, and serine 305 together coordinate [4Fe-4S] cluster. The Radical SAM core domain occupies 78-294 (FNRGTATFMI…KKEALSIGFT (217 aa)).

It belongs to the radical SAM superfamily. Lipoyl synthase family. The cofactor is [4Fe-4S] cluster.

It localises to the cytoplasm. It catalyses the reaction [[Fe-S] cluster scaffold protein carrying a second [4Fe-4S](2+) cluster] + N(6)-octanoyl-L-lysyl-[protein] + 2 oxidized [2Fe-2S]-[ferredoxin] + 2 S-adenosyl-L-methionine + 4 H(+) = [[Fe-S] cluster scaffold protein] + N(6)-[(R)-dihydrolipoyl]-L-lysyl-[protein] + 4 Fe(3+) + 2 hydrogen sulfide + 2 5'-deoxyadenosine + 2 L-methionine + 2 reduced [2Fe-2S]-[ferredoxin]. It participates in protein modification; protein lipoylation via endogenous pathway; protein N(6)-(lipoyl)lysine from octanoyl-[acyl-carrier-protein]: step 2/2. Its function is as follows. Catalyzes the radical-mediated insertion of two sulfur atoms into the C-6 and C-8 positions of the octanoyl moiety bound to the lipoyl domains of lipoate-dependent enzymes, thereby converting the octanoylated domains into lipoylated derivatives. This chain is Lipoyl synthase, found in Buchnera aphidicola subsp. Schizaphis graminum (strain Sg).